The sequence spans 323 residues: MSQPWQPTASIKQLKQRAAVLSSIRDFFAGKEVIEVDTPAMSQATVTDVHLHTFQTEFVGPGYAGGQTLYMMTSPEFHMKRLLSAGSGPIYQICKSFRNEESGRYHNPEFTMLEWYRPDFDHHDLMNEMDELLQLVLQCDKAERMSYQQAFIQELGVCPLEGTMEQLKGVARTLGLADIADPEQDRDTLLQLLFSMGVENKIGQQVPAFVYDFPASQAALAQINPTDNRVAERFEVYFKGIELANGFHELANGDEQLVRFEQDNMKRISMGLKPQPIDLHLIEALRAGFPDCAGVALGIDRLIMLALKLDHIDQVTAFPIDIA.

Position 74–76 (74–76 (SPE)) interacts with substrate. Residues 98–100 (RNE) and Asn107 contribute to the ATP site. A substrate-binding site is contributed by Tyr116. 242–243 (EL) contacts ATP. A substrate-binding site is contributed by Glu249. Gly298 contributes to the ATP binding site.

This sequence belongs to the class-II aminoacyl-tRNA synthetase family. EpmA subfamily. Homodimer.

It catalyses the reaction D-beta-lysine + L-lysyl-[protein] + ATP = N(6)-((3R)-3,6-diaminohexanoyl)-L-lysyl-[protein] + AMP + diphosphate + H(+). Its function is as follows. With EpmB is involved in the beta-lysylation step of the post-translational modification of translation elongation factor P (EF-P). Catalyzes the ATP-dependent activation of (R)-beta-lysine produced by EpmB, forming a lysyl-adenylate, from which the beta-lysyl moiety is then transferred to the epsilon-amino group of a conserved specific lysine residue in EF-P. In Photobacterium profundum (strain SS9), this protein is Elongation factor P--(R)-beta-lysine ligase.